The primary structure comprises 303 residues: BAG family molecular chaperone regulator 3 (303 aa).

Residues 1-11 show a composition bias toward polar residues; the sequence is MMKMNTGTSPS. Positions 1–27 are disordered; sequence MMKMNTGTSPSVIGGGTSGNEWESRPG. The Ubiquitin-like domain occupies 45–119; the sequence is FRVRVKYGSV…LVVKEDPISQ (75 aa). In terms of domain architecture, BAG spans 138–216; that stretch reads SISDISFEVD…KYVEALDLLK (79 aa). Residues 249–268 are disordered; sequence VEEEEEEPRNSNASSSSGTP. Positions 258 to 267 are enriched in polar residues; sequence NSNASSSSGT. Ser263 bears the Phosphoserine mark.

In terms of assembly, binds to the ATPase domain of HSP70/HSC70 chaperones. Interacts with HSP70-1.

Co-chaperone that regulates diverse cellular pathways, such as programmed cell death and stress responses. The chain is BAG family molecular chaperone regulator 3 (BAG3) from Arabidopsis thaliana (Mouse-ear cress).